We begin with the raw amino-acid sequence, 330 residues long: GTP 3',8-cyclase (330 aa).

The Radical SAM core domain occupies Arg-9 to Ala-225. Arg-18 serves as a coordination point for GTP. Positions 25 and 29 each coordinate [4Fe-4S] cluster. An S-adenosyl-L-methionine-binding site is contributed by Tyr-31. Cys-32 provides a ligand contact to [4Fe-4S] cluster. Arg-67 contributes to the GTP binding site. Gly-71 serves as a coordination point for S-adenosyl-L-methionine. Thr-97 contacts GTP. Ser-121 is a binding site for S-adenosyl-L-methionine. Lys-158 contacts GTP. S-adenosyl-L-methionine is bound at residue Met-192. Residues Cys-256 and Cys-259 each coordinate [4Fe-4S] cluster. A GTP-binding site is contributed by Arg-261–Arg-263. A [4Fe-4S] cluster-binding site is contributed by Cys-273.

It belongs to the radical SAM superfamily. MoaA family. Monomer and homodimer. [4Fe-4S] cluster serves as cofactor.

It carries out the reaction GTP + AH2 + S-adenosyl-L-methionine = (8S)-3',8-cyclo-7,8-dihydroguanosine 5'-triphosphate + 5'-deoxyadenosine + L-methionine + A + H(+). It functions in the pathway cofactor biosynthesis; molybdopterin biosynthesis. Functionally, catalyzes the cyclization of GTP to (8S)-3',8-cyclo-7,8-dihydroguanosine 5'-triphosphate. In Marinobacter nauticus (strain ATCC 700491 / DSM 11845 / VT8) (Marinobacter aquaeolei), this protein is GTP 3',8-cyclase.